We begin with the raw amino-acid sequence, 216 residues long: Protein-L-isoaspartate O-methyltransferase (216 aa).

Residue serine 60 is part of the active site.

The protein belongs to the methyltransferase superfamily. L-isoaspartyl/D-aspartyl protein methyltransferase family.

The protein localises to the cytoplasm. The catalysed reaction is [protein]-L-isoaspartate + S-adenosyl-L-methionine = [protein]-L-isoaspartate alpha-methyl ester + S-adenosyl-L-homocysteine. Catalyzes the methyl esterification of L-isoaspartyl residues in peptides and proteins that result from spontaneous decomposition of normal L-aspartyl and L-asparaginyl residues. It plays a role in the repair and/or degradation of damaged proteins. In Methanococcus aeolicus (strain ATCC BAA-1280 / DSM 17508 / OCM 812 / Nankai-3), this protein is Protein-L-isoaspartate O-methyltransferase.